The chain runs to 865 residues: MNNQGFVPASDYPTAVSYPTQGQSYNTQEEQPAYPQRFSTSQGMYAAEYGNANMMNTSENEPNNLAHSQPFRQSPSTQRNLPNQSFDFASNGAWNGSGSVKYSSPMMPSSRIPFQQEKEAAMQQQQQQQQQQQLYQRQMQSREALLSQQIPPNQIGINAHPAVRQTPQPAPSPNTPSGNANQLTPAYAASFDKFMVSLISFMEKRGTPIKSYPQINNTPINLMMLYALVMRAGGSRQVSAHNFWPKISASLGFPSPDAISLLIQYYNSYLLPYEEAWLAAQQQQKSLQQAKANHSANVQSRPKNYPQKPVQTTPEAVHANGSMHGSLHSKSPSPAFTANRFSPAAPTTVSSERNAPPYPSAPTRPTPPTVQTSSSAAPVDSAEPVAYQPIKKPIDPMLGYPLNVAATYRLDESLLRLQMPSIVDLGTVNIQALCMSLQSTLEKEITYAMNVLLILTNDQKWMFPLSECQDVVDALIDVATQCLDNLLSVLPNEDLMEIADKRPSYRQLLYNCCVEISQFSREDFSNSLSENKTKDSINAIDVHNSEQNLLAVFVIFRNLSHFEANQNVLVQNPDFFPLLIRVVKSLNFHATSLLRSSRNTLDLHKDVLIVLCQLSQNFILPNVDVARHVLLFILSFSPFNRKKSKTILNDTLPTSIPSYTPATHPYAGPAINAYAKLLAKDANNKTNFQAIFDNNPKFLDSLFLLLASVVPKFNRHCLKICERRLPLLQQSFFCLAATVSYVKQSEQAANWCNIGEGFFVSMLRLLILLSGHPSLNPPSRVASQYPTTNPFRYVIQSGISTVRRLLSLVEAGNISLSSFPKSETLLAVLLAPTTETSFLKEISNLLDRTGDSDASLENTDDKSGI.

4 disordered regions span residues 1–34 (MNNQ…QPAY), 54–92 (MMNT…ASNG), 116–143 (QEKE…QSRE), and 163–183 (VRQT…ANQL). The segment covering 17 to 30 (SYPTQGQSYNTQEE) has biased composition (polar residues). Over residues 121 to 139 (AMQQQQQQQQQQQLYQRQM) the composition is skewed to low complexity. An ARID domain is found at 188-278 (AASFDKFMVS…YLLPYEEAWL (91 aa)). A disordered region spans residues 288–380 (QQAKANHSAN…QTSSSAAPVD (93 aa)). A compositionally biased stretch (polar residues) spans 328–353 (HSKSPSPAFTANRFSPAAPTTVSSER). Pro residues predominate over residues 356 to 368 (PPYPSAPTRPTPP). Phosphoserine is present on residues Ser852 and Ser855.

Belongs to the SWI1 family. In terms of assembly, component of the SWI/SNF global transcription activator complex composed of at least arp9, arp42, snf5, snf22, snf30, sbf59, sol1, ssr1, ssr2, ssr3, ssr4 and tfg3.

It is found in the nucleus. Component of the SWI/SNF complex, an ATP-dependent chromatin remodeling complex, required for the positive and negative regulation of gene expression of a large number of genes. It changes chromatin structure by altering DNA-histone contacts within a nucleosome, leading eventually to a change in nucleosome position, thus facilitating or repressing binding of gene-specific transcription factors. The polypeptide is SWI/SNF chromatin-remodeling complex subunit sol1 (sol1) (Schizosaccharomyces pombe (strain 972 / ATCC 24843) (Fission yeast)).